The chain runs to 384 residues: MTNPIIAFKNVSKVFEDSNTVVLKDINFELEEGKFYTLLGASGSGKSTILNIIAGLLEASTGDIYLDGKRINDVPTNKRDVHTVFQNYALFPHMTVFENVAFPLKLKKMDKKEIQKRVQETLKMVRLEGFEKRAIQKLSGGQRQRVAIARAIINQPKVVLLDEPLSALDLKLRTEMQYELRELQQRLGITFVFVTHDQEEALAMSDWIFVMNEGEIVQSGTPVDIYDEPINHFVATFIGESNILSGKMIEDYLVEFNGKRFEAVDGGMRPNESVQVVIRPEDLQITLPDEGKLQVKVDTQLFRGVHYEIIAYDDLGNEWMIHSTRKAIEGEVIGLDFTPEDIHIMRLNETEEEFDARIEEYVDTDDHEDGLINAIEEERNEENL.

Residues 6–238 (IAFKNVSKVF…PINHFVATFI (233 aa)) enclose the ABC transporter domain. 40-47 (GASGSGKS) lines the ATP pocket.

The protein belongs to the ABC transporter superfamily. Spermidine/putrescine importer (TC 3.A.1.11.1) family. As to quaternary structure, the complex is composed of two ATP-binding proteins (PotA), two transmembrane proteins (PotB and PotC) and a solute-binding protein (PotD).

Its subcellular location is the cell membrane. The enzyme catalyses ATP + H2O + polyamine-[polyamine-binding protein]Side 1 = ADP + phosphate + polyamineSide 2 + [polyamine-binding protein]Side 1.. In terms of biological role, part of the ABC transporter complex PotABCD involved in spermidine/putrescine import. Responsible for energy coupling to the transport system. The chain is Spermidine/putrescine import ATP-binding protein PotA from Streptococcus agalactiae serotype Ia (strain ATCC 27591 / A909 / CDC SS700).